The sequence spans 51 residues: ATP synthase F(1) complex subunit epsilon, mitochondrial (51 aa).

N6-acetyllysine; alternate occurs at positions 21, 32, and 37. Lysine 21, lysine 32, and lysine 37 each carry N6-succinyllysine; alternate. The residue at position 44 (lysine 44) is an N6-acetyllysine.

This sequence belongs to the eukaryotic ATPase epsilon family. In terms of assembly, component of the ATP synthase complex composed at least of ATP5F1A/subunit alpha, ATP5F1B/subunit beta, ATP5MC1/subunit c (homooctomer), MT-ATP6/subunit a, MT-ATP8/subunit 8, ATP5ME/subunit e, ATP5MF/subunit f, ATP5MG/subunit g, ATP5MK/subunit k, ATP5MJ/subunit j, ATP5F1C/subunit gamma, ATP5F1D/subunit delta, ATP5F1E/subunit epsilon, ATP5PF/subunit F6, ATP5PB/subunit b, ATP5PD/subunit d, ATP5PO/subunit OSCP. ATP synthase complex consists of a soluble F(1) head domain (subunits alpha(3) and beta(3)) - the catalytic core - and a membrane F(0) domain - the membrane proton channel (subunits c, a, 8, e, f, g, k and j). These two domains are linked by a central stalk (subunits gamma, delta, and epsilon) rotating inside the F1 region and a stationary peripheral stalk (subunits F6, b, d, and OSCP). Ubiquitous.

Its subcellular location is the mitochondrion. The protein localises to the mitochondrion inner membrane. Subunit epsilon, of the mitochondrial membrane ATP synthase complex (F(1)F(0) ATP synthase or Complex V) that produces ATP from ADP in the presence of a proton gradient across the membrane which is generated by electron transport complexes of the respiratory chain. ATP synthase complex consist of a soluble F(1) head domain - the catalytic core - and a membrane F(1) domain - the membrane proton channel. These two domains are linked by a central stalk rotating inside the F(1) region and a stationary peripheral stalk. During catalysis, ATP synthesis in the catalytic domain of F(1) is coupled via a rotary mechanism of the central stalk subunits to proton translocation. In vivo, can only synthesize ATP although its ATP hydrolase activity can be activated artificially in vitro. May be essential for the assembly of F(1) and may play an important role in the incorporation of the hydrophobic subunit c into the F(1)-c oligomer rotor of the mitochondrial ATP synthase complex. In Homo sapiens (Human), this protein is ATP synthase F(1) complex subunit epsilon, mitochondrial.